Here is a 140-residue protein sequence, read N- to C-terminus: Class I hydrophobin C (140 aa).

Residues 1-23 (MKFFVPAFLFAATAMALPGSGSA) form the signal peptide. 4 cysteine pairs are disulfide-bonded: C41–C114, C49–C108, C50–C85, and C115–C133.

The protein belongs to the fungal hydrophobin family.

Its subcellular location is the secreted. It is found in the cell wall. In terms of biological role, aerial growth, conidiation, and dispersal of filamentous fungi in the environment rely upon a capability of their secreting small amphipathic proteins called hydrophobins (HPBs) with low sequence identity. Class I can self-assemble into an outermost layer of rodlet bundles on aerial cell surfaces, conferring cellular hydrophobicity that supports fungal growth, development and dispersal; whereas Class II form highly ordered films at water-air interfaces through intermolecular interactions but contribute nothing to the rodlet structure. In P.expansum, hydrophobins contribute to germination, tolerance to cold stress and mycotoxins patulin and citrinin production. HfbC is involved in the virulence on apple. This chain is Class I hydrophobin C, found in Penicillium expansum (Blue mold rot fungus).